Consider the following 283-residue polypeptide: Probable endonuclease 4 (283 aa).

Positions 69, 109, 145, 179, 182, 216, 229, 231, and 261 each coordinate Zn(2+).

This sequence belongs to the AP endonuclease 2 family. Zn(2+) serves as cofactor.

The catalysed reaction is Endonucleolytic cleavage to 5'-phosphooligonucleotide end-products.. Its function is as follows. Endonuclease IV plays a role in DNA repair. It cleaves phosphodiester bonds at apurinic or apyrimidinic (AP) sites, generating a 3'-hydroxyl group and a 5'-terminal sugar phosphate. This Campylobacter concisus (strain 13826) protein is Probable endonuclease 4.